The sequence spans 312 residues: Bifunctional pinoresinol-lariciresinol reductase (312 aa).

Residues 10–16 (GGTGYIG), R35, and K44 contribute to the NADP(+) site. K136 (proton acceptor) is an active-site residue. R140 is a binding site for NADP(+). H268 provides a ligand contact to substrate.

This sequence belongs to the NmrA-type oxidoreductase family. Isoflavone reductase subfamily. In terms of assembly, dimer. As to expression, expressed in seed coats, but not in embryos, leaves, stems and roots.

Reductase involved in lignan biosynthesis. Catalyzes the sequential conversion of pinoresinol into lariciresinol and of lariciresinol into secoisolariciresinol. Abstracts the 4R-hydride from the NADPH cofactor during catalysis. This chain is Bifunctional pinoresinol-lariciresinol reductase, found in Linum usitatissimum (Flax).